A 693-amino-acid polypeptide reads, in one-letter code: Polyribonucleotide nucleotidyltransferase (693 aa).

D489 and D495 together coordinate Mg(2+). Residues P556 to V615 form the KH domain. The S1 motif domain occupies G625 to R693.

Belongs to the polyribonucleotide nucleotidyltransferase family. Component of the RNA degradosome, which is a multiprotein complex involved in RNA processing and mRNA degradation. It depends on Mg(2+) as a cofactor.

Its subcellular location is the cytoplasm. The catalysed reaction is RNA(n+1) + phosphate = RNA(n) + a ribonucleoside 5'-diphosphate. Involved in mRNA degradation. Catalyzes the phosphorolysis of single-stranded polyribonucleotides processively in the 3'- to 5'-direction. The chain is Polyribonucleotide nucleotidyltransferase from Francisella philomiragia subsp. philomiragia (strain ATCC 25017 / CCUG 19701 / FSC 153 / O#319-036).